Consider the following 1455-residue polypeptide: DNA-directed RNA polymerase subunit beta (1455 aa).

The protein belongs to the RNA polymerase beta chain family. The RNAP catalytic core consists of 2 alpha, 1 beta, 1 beta' and 1 omega subunit. When a sigma factor is associated with the core the holoenzyme is formed, which can initiate transcription.

It carries out the reaction RNA(n) + a ribonucleoside 5'-triphosphate = RNA(n+1) + diphosphate. Functionally, DNA-dependent RNA polymerase catalyzes the transcription of DNA into RNA using the four ribonucleoside triphosphates as substrates. The polypeptide is DNA-directed RNA polymerase subunit beta (Rhizorhabdus wittichii (strain DSM 6014 / CCUG 31198 / JCM 15750 / NBRC 105917 / EY 4224 / RW1) (Sphingomonas wittichii)).